The primary structure comprises 836 residues: RNA-binding protein 12B-A (836 aa).

An RRM 1 domain is found at 154–229; sequence PYLFLRGLPY…RFIEVMQGSE (76 aa). Residues 237–277 are disordered; sequence GTATEGGDTPRMRSEEHSPSRRINGRHFRKRSHSKSPRARS. Over residues 244–255 the composition is skewed to basic and acidic residues; it reads DTPRMRSEEHSP. Positions 259 to 277 are enriched in basic residues; sequence INGRHFRKRSHSKSPRARS. RRM domains lie at 283–359 and 401–478; these read FYVH…PVSR and LCIY…LISE. Disordered stretches follow at residues 539–572 and 620–644; these read GHFK…PWEE and SQEH…RRSR. Over residues 550-572 the composition is skewed to basic and acidic residues; that stretch reads QSDRRSPEDFRHSPEDYRHPWEE. Phosphoserine is present on S703. Position 758 is an N6-acetyllysine (K758). One can recognise an RRM 4 domain in the interval 760 to 836; sequence IPVKISNLPF…GPRKVKLSLL (77 aa).

This is RNA-binding protein 12B-A (Rbm12b1) from Mus musculus (Mouse).